A 470-amino-acid chain; its full sequence is MALWGGRFSQAADARFKNFNDSLRFDYRLAEQDITGSVAWSKALVSVGILTQDEQLTIEAALNDLKLAVLENPEQILQSDAEDIHSWVETQLIAKVGDLGKKLHTGRSRNDQVATDLKLWCKQQGEQLLMQLDKTQQQLVSLAREHQHTVLPGYTHLQRAQPVTFSHWCLAYVEMLERDFSRLTDCLKRLDTCPLGSGALAGTAYPMDRTELAHTLGFASATLNSLDSVSDRDHVMELMSTASMSMIHLSRLAEDLIFYNSGESNFIELADAVTSGSSLMPQKKNPDALELIRGKTGRVFGSLSAMLMTLKALPLAYNKDMQEDKEGLFDALDTWSDCLEMAAMSLVGMKINEERTKEAALGGYSNATELADYLVAKGVPFRDSHHIVGEAVVAAIAKGVPLEALTLAEFKAFDVLIEDDVYHHLSLDETLAKRKAQGGVSPVQVEFALTNAEKRLEERDTSGISIRAAR.

The tract at residues 1–470 is argininosuccinate lyase; it reads MALWGGRFSQ…TSGISIRAAR (470 aa).

The protein in the N-terminal section; belongs to the lyase 1 family. Argininosuccinate lyase subfamily. In the C-terminal section; belongs to the acetyltransferase family. ArgA subfamily.

The protein localises to the cytoplasm. It catalyses the reaction 2-(N(omega)-L-arginino)succinate = fumarate + L-arginine. The enzyme catalyses L-glutamate + acetyl-CoA = N-acetyl-L-glutamate + CoA + H(+). Its pathway is amino-acid biosynthesis; L-arginine biosynthesis; N(2)-acetyl-L-ornithine from L-glutamate: step 1/4. It participates in amino-acid biosynthesis; L-arginine biosynthesis; L-arginine from L-ornithine and carbamoyl phosphate: step 3/3. This chain is Bifunctional protein ArgHA (argHA), found in Moritella profunda.